Reading from the N-terminus, the 451-residue chain is Tubulin gamma-2 chain (451 aa).

Phosphoserine; by BRSK1 is present on Ser131. 142–148 contributes to the GTP binding site; the sequence is AGGTGSG.

This sequence belongs to the tubulin family. Component of the gamma-tubulin ring complex (gTuRC) consisting of TUBGCP2, TUBGCP3, TUBGCP4, TUBGCP5 and TUBGCP6 and gamma-tubulin TUBG1 or TUBG2. TUBGCP2, TUBGCP3, TUBGCP4, TUBGCP5 and TUBGCP6 assemble in a 5:5:2:1:1 stoichiometry; each is associated with a gamma-tubulin, thereby arranging 14 gamma-tubulins in a helical manner. Gamma-tubulin at the first position is blocked by TUBGCP3 at the last position, allowing 13 protafilaments to grow into a microtubule. Interacts with alpha-beta tubulin heterodimers; the interaction allows microtubules to nucleate from the gTuRC. In terms of processing, phosphorylation at Ser-131 by BRSK1 regulates centrosome duplication, possibly by mediating relocation of gamma-tubulin and its associated proteins from the cytoplasm to the centrosome.

It localises to the cytoplasm. Its subcellular location is the cytoskeleton. The protein resides in the microtubule organizing center. It is found in the centrosome. Tubulin is the major constituent of microtubules, protein filaments consisting of alpha- and beta-tubulin heterodimers. Gamma-tubulin is a key component of the gamma-tubulin ring complex (gTuRC) which mediates microtubule nucleation. The gTuRC regulates the minus-end nucleation of alpha-beta tubulin heterodimers that grow into microtubule protafilaments, a critical step in centrosome duplication and spindle formation. This chain is Tubulin gamma-2 chain (Tubg2), found in Mus musculus (Mouse).